We begin with the raw amino-acid sequence, 80 residues long: Exodeoxyribonuclease 7 small subunit (80 aa).

This sequence belongs to the XseB family. In terms of assembly, heterooligomer composed of large and small subunits.

The protein resides in the cytoplasm. The catalysed reaction is Exonucleolytic cleavage in either 5'- to 3'- or 3'- to 5'-direction to yield nucleoside 5'-phosphates.. Bidirectionally degrades single-stranded DNA into large acid-insoluble oligonucleotides, which are then degraded further into small acid-soluble oligonucleotides. The polypeptide is Exodeoxyribonuclease 7 small subunit (Caulobacter sp. (strain K31)).